Reading from the N-terminus, the 952-residue chain is Protein translocase subunit SecA (952 aa).

ATP-binding positions include Gln104, Gly122 to Thr126, and Asp512.

This sequence belongs to the SecA family. In terms of assembly, monomer and homodimer. Part of the essential Sec protein translocation apparatus which comprises SecA, SecYEG and auxiliary proteins SecDF. Other proteins may also be involved.

The protein localises to the cell inner membrane. Its subcellular location is the cytoplasm. The enzyme catalyses ATP + H2O + cellular proteinSide 1 = ADP + phosphate + cellular proteinSide 2.. In terms of biological role, part of the Sec protein translocase complex. Interacts with the SecYEG preprotein conducting channel. Has a central role in coupling the hydrolysis of ATP to the transfer of proteins into and across the cell membrane, serving as an ATP-driven molecular motor driving the stepwise translocation of polypeptide chains across the membrane. This is Protein translocase subunit SecA from Gloeobacter violaceus (strain ATCC 29082 / PCC 7421).